Consider the following 216-residue polypeptide: Large ribosomal subunit protein uL4 (216 aa).

Residues 51–78 (KGRSEVHGSNTKPYKQKGTGRARRGDKK) are disordered. A compositionally biased stretch (basic residues) spans 64–76 (YKQKGTGRARRGD).

It belongs to the universal ribosomal protein uL4 family. Part of the 50S ribosomal subunit.

Its function is as follows. One of the primary rRNA binding proteins, this protein initially binds near the 5'-end of the 23S rRNA. It is important during the early stages of 50S assembly. It makes multiple contacts with different domains of the 23S rRNA in the assembled 50S subunit and ribosome. Forms part of the polypeptide exit tunnel. The chain is Large ribosomal subunit protein uL4 from Treponema pallidum (strain Nichols).